Here is a 351-residue protein sequence, read N- to C-terminus: Holliday junction branch migration complex subunit RuvB (351 aa).

Positions methionine 1–tyrosine 189 are large ATPase domain (RuvB-L). Residues leucine 28, arginine 29, glycine 70, lysine 73, threonine 74, serine 75, glutamate 136–phenylalanine 138, arginine 179, tyrosine 189, and arginine 226 each bind ATP. Residue threonine 74 coordinates Mg(2+). Residues glutamate 190–aspartate 260 are small ATPAse domain (RuvB-S). The tract at residues glutamate 263 to aspartate 351 is head domain (RuvB-H). 2 residues coordinate DNA: arginine 318 and arginine 323.

This sequence belongs to the RuvB family. As to quaternary structure, homohexamer. Forms an RuvA(8)-RuvB(12)-Holliday junction (HJ) complex. HJ DNA is sandwiched between 2 RuvA tetramers; dsDNA enters through RuvA and exits via RuvB. An RuvB hexamer assembles on each DNA strand where it exits the tetramer. Each RuvB hexamer is contacted by two RuvA subunits (via domain III) on 2 adjacent RuvB subunits; this complex drives branch migration. In the full resolvosome a probable DNA-RuvA(4)-RuvB(12)-RuvC(2) complex forms which resolves the HJ.

It is found in the cytoplasm. The catalysed reaction is ATP + H2O = ADP + phosphate + H(+). Its function is as follows. The RuvA-RuvB-RuvC complex processes Holliday junction (HJ) DNA during genetic recombination and DNA repair, while the RuvA-RuvB complex plays an important role in the rescue of blocked DNA replication forks via replication fork reversal (RFR). RuvA specifically binds to HJ cruciform DNA, conferring on it an open structure. The RuvB hexamer acts as an ATP-dependent pump, pulling dsDNA into and through the RuvAB complex. RuvB forms 2 homohexamers on either side of HJ DNA bound by 1 or 2 RuvA tetramers; 4 subunits per hexamer contact DNA at a time. Coordinated motions by a converter formed by DNA-disengaged RuvB subunits stimulates ATP hydrolysis and nucleotide exchange. Immobilization of the converter enables RuvB to convert the ATP-contained energy into a lever motion, pulling 2 nucleotides of DNA out of the RuvA tetramer per ATP hydrolyzed, thus driving DNA branch migration. The RuvB motors rotate together with the DNA substrate, which together with the progressing nucleotide cycle form the mechanistic basis for DNA recombination by continuous HJ branch migration. Branch migration allows RuvC to scan DNA until it finds its consensus sequence, where it cleaves and resolves cruciform DNA. This Mycobacterium avium (strain 104) protein is Holliday junction branch migration complex subunit RuvB.